Here is a 278-residue protein sequence, read N- to C-terminus: Indole-3-glycerol phosphate synthase (278 aa).

It belongs to the TrpC family.

The catalysed reaction is 1-(2-carboxyphenylamino)-1-deoxy-D-ribulose 5-phosphate + H(+) = (1S,2R)-1-C-(indol-3-yl)glycerol 3-phosphate + CO2 + H2O. It participates in amino-acid biosynthesis; L-tryptophan biosynthesis; L-tryptophan from chorismate: step 4/5. This is Indole-3-glycerol phosphate synthase from Pseudomonas fluorescens (strain Pf0-1).